The chain runs to 481 residues: Cysteine--tRNA ligase (481 aa).

C27 lines the Zn(2+) pocket. Positions 29-39 match the 'HIGH' region motif; it reads PTVYNYAHIGN. C222, H247, and E251 together coordinate Zn(2+). The 'KMSKS' region motif lies at 279–283; that stretch reads KMSKS. K282 serves as a coordination point for ATP.

This sequence belongs to the class-I aminoacyl-tRNA synthetase family. In terms of assembly, monomer. The cofactor is Zn(2+).

It localises to the cytoplasm. The catalysed reaction is tRNA(Cys) + L-cysteine + ATP = L-cysteinyl-tRNA(Cys) + AMP + diphosphate. This chain is Cysteine--tRNA ligase, found in Borrelia turicatae (strain 91E135).